A 186-amino-acid polypeptide reads, in one-letter code: Adenylate kinase (186 aa).

Residue G14–T19 coordinates ATP. The tract at residues S34–V63 is NMP. Residues T35, R40, D61–V63, G84–R87, and Q91 each bind AMP. Residues R125–D135 are LID. An ATP-binding site is contributed by R126. AMP contacts are provided by R132 and R143. G171 is an ATP binding site.

It belongs to the adenylate kinase family. In terms of assembly, monomer.

It localises to the cytoplasm. The catalysed reaction is AMP + ATP = 2 ADP. It functions in the pathway purine metabolism; AMP biosynthesis via salvage pathway; AMP from ADP: step 1/1. Its function is as follows. Catalyzes the reversible transfer of the terminal phosphate group between ATP and AMP. Plays an important role in cellular energy homeostasis and in adenine nucleotide metabolism. In Thermus thermophilus (strain ATCC BAA-163 / DSM 7039 / HB27), this protein is Adenylate kinase.